We begin with the raw amino-acid sequence, 333 residues long: DNA-directed RNA polymerase subunit alpha (333 aa).

The alpha N-terminal domain (alpha-NTD) stretch occupies residues 1–234; sequence MQISVNEFLT…QQLAAFVDLK (234 aa). The segment at 248–333 is alpha C-terminal domain (alpha-CTD); it reads IDPILLRPVD…SLKKDDKATA (86 aa).

It belongs to the RNA polymerase alpha chain family. Homodimer. The RNAP catalytic core consists of 2 alpha, 1 beta, 1 beta' and 1 omega subunit. When a sigma factor is associated with the core the holoenzyme is formed, which can initiate transcription.

It carries out the reaction RNA(n) + a ribonucleoside 5'-triphosphate = RNA(n+1) + diphosphate. Its function is as follows. DNA-dependent RNA polymerase catalyzes the transcription of DNA into RNA using the four ribonucleoside triphosphates as substrates. The polypeptide is DNA-directed RNA polymerase subunit alpha (Ectopseudomonas mendocina (strain ymp) (Pseudomonas mendocina)).